We begin with the raw amino-acid sequence, 657 residues long: Translation factor GUF1, mitochondrial (657 aa).

The transit peptide at Met1–Asn39 directs the protein to the mitochondrion. Residues Glu59–Val239 enclose the tr-type G domain. Residues Thr109–Ser116, Leu173–Glu177, and Leu227–Thr230 each bind GTP.

It belongs to the TRAFAC class translation factor GTPase superfamily. Classic translation factor GTPase family. LepA subfamily.

The protein localises to the mitochondrion inner membrane. The enzyme catalyses GTP + H2O = GDP + phosphate + H(+). Functionally, promotes mitochondrial protein synthesis. May act as a fidelity factor of the translation reaction, by catalyzing a one-codon backward translocation of tRNAs on improperly translocated ribosomes. Binds to mitochondrial ribosomes in a GTP-dependent manner. The sequence is that of Translation factor GUF1, mitochondrial from Ajellomyces capsulatus (strain NAm1 / WU24) (Darling's disease fungus).